Reading from the N-terminus, the 274-residue chain is tRNA dimethylallyltransferase (274 aa).

The interaction with substrate tRNA stretch occupies residues 9 to 12 (DSLS).

It belongs to the IPP transferase family. In terms of assembly, monomer. It depends on Mg(2+) as a cofactor.

It carries out the reaction adenosine(37) in tRNA + dimethylallyl diphosphate = N(6)-dimethylallyladenosine(37) in tRNA + diphosphate. Functionally, catalyzes the transfer of a dimethylallyl group onto the adenine at position 37 in tRNAs that read codons beginning with uridine, leading to the formation of N6-(dimethylallyl)adenosine (i(6)A). This is tRNA dimethylallyltransferase (miaA) from Helicobacter pylori (strain P12).